The sequence spans 343 residues: Flavonoid 3'-O-methyltransferase FOMT (343 aa).

Glycine 184, aspartate 207, aspartate 227, methionine 228, methionine 240, and lysine 241 together coordinate S-adenosyl-L-homocysteine. Residue histidine 245 is the Proton acceptor of the active site. Residues glutamate 273 and glutamate 305 contribute to the active site.

Belongs to the class I-like SAM-binding methyltransferase superfamily. Cation-independent O-methyltransferase family. In terms of assembly, homodimer.

It carries out the reaction 3',5-dihydroxy-3,4',7-trimethoxyflavone + S-adenosyl-L-methionine = 5-hydroxy-3,7,3',4'-tetramethoxyflavone + S-adenosyl-L-homocysteine + H(+). It participates in flavonoid metabolism. With respect to regulation, inhibited by nickel (NiCl(2) and NiSO(4)) and para-chloromercuribenzoate. Its function is as follows. Catalyzes the 3'- or 5'-O-methylation of partially methylated flavonols, but does not accept quercetin or caffeate as substrates for methylation. This is Flavonoid 3'-O-methyltransferase FOMT from Chrysosplenium americanum (American golden saxifrage).